Here is a 201-residue protein sequence, read N- to C-terminus: Dephospho-CoA kinase (201 aa).

The region spanning 4 to 201 is the DPCK domain; that stretch reads SVGLTGNIAS…KYLREAKIKQ (198 aa). 12–17 is a binding site for ATP; that stretch reads ASGKST.

It belongs to the CoaE family.

The protein resides in the cytoplasm. It carries out the reaction 3'-dephospho-CoA + ATP = ADP + CoA + H(+). It participates in cofactor biosynthesis; coenzyme A biosynthesis; CoA from (R)-pantothenate: step 5/5. Catalyzes the phosphorylation of the 3'-hydroxyl group of dephosphocoenzyme A to form coenzyme A. This is Dephospho-CoA kinase from Legionella pneumophila (strain Lens).